Reading from the N-terminus, the 320-residue chain is N-acetylneuraminate lyase (320 aa).

Aceneuramate is bound by residues Thr-51 and Thr-52. Tyr-143 serves as the catalytic Proton donor. Catalysis depends on Lys-173, which acts as the Schiff-base intermediate with substrate. Residues Ser-175, Gly-199, Asp-201, Glu-202, and Ser-218 each coordinate aceneuramate.

The protein belongs to the DapA family. NanA subfamily. As to quaternary structure, homotetramer.

The protein resides in the cytoplasm. The catalysed reaction is aceneuramate = aldehydo-N-acetyl-D-mannosamine + pyruvate. The protein operates within amino-sugar metabolism; N-acetylneuraminate degradation. Functionally, catalyzes the cleavage of N-acetylneuraminic acid (sialic acid) to form pyruvate and N-acetylmannosamine via a Schiff base intermediate. It prevents sialic acids from being recycled and returning to the cell surface. Involved in the N-glycolylneuraminic acid (Neu5Gc) degradation pathway. In Pongo abelii (Sumatran orangutan), this protein is N-acetylneuraminate lyase.